Consider the following 527-residue polypeptide: Probable feruloyl esterase B-2 (527 aa).

An N-terminal signal peptide occupies residues methionine 1–alanine 19. 2 disulfides stabilise this stretch: cysteine 28–cysteine 75 and cysteine 63–cysteine 114. Asparagine 53, asparagine 85, asparagine 98, asparagine 138, and asparagine 180 each carry an N-linked (GlcNAc...) asparagine glycan. 4 disulfides stabilise this stretch: cysteine 187-cysteine 441, cysteine 256-cysteine 273, cysteine 282-cysteine 291, and cysteine 503-cysteine 525. Serine 188 (acyl-ester intermediate) is an active-site residue. Residues aspartate 257, aspartate 260, alanine 262, aspartate 264, and isoleucine 266 each coordinate Ca(2+). N-linked (GlcNAc...) asparagine glycosylation is found at asparagine 311 and asparagine 355. Active-site charge relay system residues include aspartate 400 and histidine 440. The N-linked (GlcNAc...) asparagine glycan is linked to asparagine 516.

This sequence belongs to the tannase family.

The protein resides in the secreted. The catalysed reaction is feruloyl-polysaccharide + H2O = ferulate + polysaccharide.. Involved in degradation of plant cell walls. Hydrolyzes the feruloyl-arabinose ester bond in arabinoxylans as well as the feruloyl-galactose and feruloyl-arabinose ester bonds in pectin. This chain is Probable feruloyl esterase B-2 (faeB-2), found in Aspergillus terreus (strain NIH 2624 / FGSC A1156).